We begin with the raw amino-acid sequence, 422 residues long: Golgi-associated RAB2 interactor protein 2 (422 aa).

The tract at residues 353 to 404 (PVESEANTSKEMKDKTSEEKMPDFQSTALKAEESRSLRTESNTSVLSPHIKS) is disordered. The segment covering 360–374 (TSKEMKDKTSEEKMP) has biased composition (basic and acidic residues).

The protein belongs to the GARIN family. As to quaternary structure, interacts with CALM1. In terms of tissue distribution, expressed in spermatozoa (at protein level).

Its subcellular location is the cell projection. The protein localises to the cilium. It localises to the flagellum. Its function is as follows. Seems to play a role in sperm motility. In Homo sapiens (Human), this protein is Golgi-associated RAB2 interactor protein 2.